The primary structure comprises 640 residues: Endoglucanase 2 (640 aa).

The first 34 residues, 1 to 34 (MARGGGAAGVSMAHHLGIALVVLVFAAMAQVARG), serve as a signal peptide directing secretion. Catalysis depends on Asp93, which acts as the Nucleophile. Catalysis depends on residues His428, Asp480, and Glu489. Positions 512-640 (RARGRLGQSL…DVWVTGYKLV (129 aa)) are cleaved as a propeptide — removed in mature form. An N-linked (GlcNAc...) asparagine glycan is attached at Asn528.

This sequence belongs to the glycosyl hydrolase 9 (cellulase E) family. As to expression, expressed in roots and flowers.

It is found in the secreted. It carries out the reaction Endohydrolysis of (1-&gt;4)-beta-D-glucosidic linkages in cellulose, lichenin and cereal beta-D-glucans.. Hydrolyzes 1,4-beta-glycosyl linkages of 1,4-beta-glucans and 1,3-1,4-beta-glucans. Possesses broad substrate specificity for hemicelluloses of type II cell walls. Substrate preference is carboxymethyl-cellulose &gt; 1,3-1,4-beta-glucan &gt; lichenan &gt; arabinoxylan &gt; phospho-swollen cellulose &gt; xylan &gt; glucomannan. May participate in lateral root development. The protein is Endoglucanase 2 (GLU5) of Oryza sativa subsp. japonica (Rice).